We begin with the raw amino-acid sequence, 412 residues long: Polyferredoxin protein MvhB (412 aa).

4Fe-4S ferredoxin-type domains lie at 2–29 (IVIN…VKPE), 30–57 (DVIY…HEDI), 66–95 (KKIT…LVND), 96–127 (GKAS…IEGV), 138–166 (DKPI…LPKY), 168–197 (ESIE…ISGK), 207–236 (ENFT…PKSD), 237–265 (LTVS…LEVK), 275–304 (EGIV…VVSP), 311–344 (GLKK…LVEV), 356–385 (NRIQ…LTDD), and 386–412 (EKLP…LLIK). 4 residues coordinate [4Fe-4S] cluster: Cys-9, Cys-12, Cys-15, and Cys-19. Cys-75, Cys-78, Cys-81, Cys-85, Cys-107, Cys-110, Cys-113, Cys-117, Cys-146, Cys-149, Cys-152, Cys-156, Cys-177, Cys-180, Cys-183, Cys-187, Cys-216, Cys-219, Cys-222, Cys-226, Cys-245, Cys-248, Cys-251, Cys-255, Cys-284, Cys-287, Cys-290, Cys-294, Cys-324, Cys-327, Cys-330, Cys-334, Cys-365, Cys-368, Cys-371, and Cys-375 together coordinate [4Fe-4S] cluster.

[4Fe-4S] cluster serves as cofactor.

In Methanothermus fervidus, this protein is Polyferredoxin protein MvhB (mvhB).